Consider the following 258-residue polypeptide: Hydroxyethylthiazole kinase (258 aa).

Met37 is a binding site for substrate. The ATP site is built by Arg112 and Thr158. Residue Ala185 participates in substrate binding.

Belongs to the Thz kinase family. The cofactor is Mg(2+).

It carries out the reaction 5-(2-hydroxyethyl)-4-methylthiazole + ATP = 4-methyl-5-(2-phosphooxyethyl)-thiazole + ADP + H(+). It functions in the pathway cofactor biosynthesis; thiamine diphosphate biosynthesis; 4-methyl-5-(2-phosphoethyl)-thiazole from 5-(2-hydroxyethyl)-4-methylthiazole: step 1/1. Its function is as follows. Catalyzes the phosphorylation of the hydroxyl group of 4-methyl-5-beta-hydroxyethylthiazole (THZ). The polypeptide is Hydroxyethylthiazole kinase (Rhizobium etli (strain CIAT 652)).